Consider the following 311-residue polypeptide: Olfactory receptor 4K1 (311 aa).

Residues 1–25 are Extracellular-facing; it reads MAHTNESMVSEFVLLGLSNSWGLQL. An N-linked (GlcNAc...) asparagine glycan is attached at asparagine 5. Residues 26-49 form a helical membrane-spanning segment; the sequence is FFFAIFSIVYVTSVLGNVLIIVII. The Cytoplasmic segment spans residues 50 to 57; it reads SFDSHLNS. Residues 58–79 traverse the membrane as a helical segment; that stretch reads PMYFLLSNLSFIDICQSNFATP. The Extracellular portion of the chain corresponds to 80 to 100; it reads KMLVDFFIERKTISFEGCMAQ. Cysteine 97 and cysteine 189 are joined by a disulfide. Residues 101-120 form a helical membrane-spanning segment; it reads IFVLHSFVGSEMMLLVAMAY. Residues 121-139 are Cytoplasmic-facing; the sequence is DRFIAICKPLHYSTIMNRR. The chain crosses the membrane as a helical span at residues 140–158; it reads LCVIFVSISWAVGVLHSVS. At 159–195 the chain is on the extracellular side; that stretch reads HLAFTVDLPFCGPNEVDSFFCDLPLVIELACMDTYEM. Residues 196–219 form a helical membrane-spanning segment; that stretch reads EIMTLTNSGLISLSCFLALIISYT. The Cytoplasmic segment spans residues 220 to 235; it reads IILIGVRCRSSSGSSK. A helical transmembrane segment spans residues 236 to 258; sequence ALSTLTAHITVVILFFGPCIYFY. The Extracellular portion of the chain corresponds to 259 to 269; it reads IWPFSRLPVDK. A helical membrane pass occupies residues 270-289; the sequence is FLSVFYTVCTPLLNPIIYSL. The Cytoplasmic segment spans residues 290–311; it reads RNEDVKAAMWKLRNRHVNSWKN.

This sequence belongs to the G-protein coupled receptor 1 family.

It is found in the cell membrane. Odorant receptor. This Homo sapiens (Human) protein is Olfactory receptor 4K1 (OR4K1).